The primary structure comprises 140 residues: uncharacterized protein (140 aa).

The segment at 121–140 (EEVKNGELIDPNVTTEDEKL) is disordered.

This is an uncharacterized protein from Schizosaccharomyces pombe (strain 972 / ATCC 24843) (Fission yeast).